Reading from the N-terminus, the 112-residue chain is T cell receptor alpha variable 21 (112 aa).

The signal sequence occupies residues 1–19; sequence METLLGLLILWLQLQWVSS. An Ig-like domain is found at 21–112; that stretch reads QEVTQIPAAL…DSATYLCAVR (92 aa). 2 N-linked (GlcNAc...) asparagine glycosylation sites follow: Asn-41 and Asn-82. An intrachain disulfide couples Cys-42 to Cys-109.

As to quaternary structure, alpha-beta TR is a heterodimer composed of an alpha and beta chain; disulfide-linked. The alpha-beta TR is associated with the transmembrane signaling CD3 coreceptor proteins to form the TR-CD3 (TcR or TCR). The assembly of alpha-beta TR heterodimers with CD3 occurs in the endoplasmic reticulum where a single alpha-beta TR heterodimer associates with one CD3D-CD3E heterodimer, one CD3G-CD3E heterodimer and one CD247 homodimer forming a stable octameric structure. CD3D-CD3E and CD3G-CD3E heterodimers preferentially associate with TR alpha and TR beta chains, respectively. The association of the CD247 homodimer is the last step of TcR assembly in the endoplasmic reticulum and is required for transport to the cell surface.

It localises to the cell membrane. V region of the variable domain of T cell receptor (TR) alpha chain that participates in the antigen recognition. Alpha-beta T cell receptors are antigen specific receptors which are essential to the immune response and are present on the cell surface of T lymphocytes. Recognize peptide-major histocompatibility (MH) (pMH) complexes that are displayed by antigen presenting cells (APC), a prerequisite for efficient T cell adaptive immunity against pathogens. Binding of alpha-beta TR to pMH complex initiates TR-CD3 clustering on the cell surface and intracellular activation of LCK that phosphorylates the ITAM motifs of CD3G, CD3D, CD3E and CD247 enabling the recruitment of ZAP70. In turn ZAP70 phosphorylates LAT, which recruits numerous signaling molecules to form the LAT signalosome. The LAT signalosome propagates signal branching to three major signaling pathways, the calcium, the mitogen-activated protein kinase (MAPK) kinase and the nuclear factor NF-kappa-B (NF-kB) pathways, leading to the mobilization of transcription factors that are critical for gene expression and essential for T cell growth and differentiation. The T cell repertoire is generated in the thymus, by V-(D)-J rearrangement. This repertoire is then shaped by intrathymic selection events to generate a peripheral T cell pool of self-MH restricted, non-autoaggressive T cells. Post-thymic interaction of alpha-beta TR with the pMH complexes shapes TR structural and functional avidity. This is T cell receptor alpha variable 21 from Homo sapiens (Human).